Here is a 776-residue protein sequence, read N- to C-terminus: MMTNGAKTLYDKVFEAHIVHQDESGSCLLYIDRHLVHEVTSPQAFEGLKTAGRPVRRTDCTLATVDHNIPTESRRHFRNTESFIKEADSRLQVQTLEQNVKDFHVPYLGMSDERQGIVHIIGPEQGFTLPGTTVVCGDSHTSTHGAFGALAFGIGTSEVEHVLATQTVIQSKSKNMRIHVEGSLSPGITSKDLILHIIGVIGTAGGTGCVIEFTGQAIQELTMEARMSMCNMAIEAGARAGMIQPDETTFEYLKGRPLAPTGAEWEKAVTYWKTLKTDEDAVFDISVTVKGADIRPTITWGTSPQDALPIDAAVPDPANVSDPIKRSGMEAALEYMGLEPNTLLKDIKIDKVFIGSCTNARIEDLRAAAAVVDGHRIAPTVKRAMVVPGSGLVKKQAEAEGLDKIFEAAGFEWREAGCSMCLGMNPDILGPKERCASTSNRNFEGRQGRLSRTHLMSPAMAAAAGIMGHFVDIREFEFKESSAPKVEVRHDTDSSTLEEANYGHAKEEPPSAELSDVAKQEKVNDIPVSNSSTQSPGSAPSADAGLQPFLQLQGIAAPLDKANVDTDAIIPKQFLKTIKRTGLKEGLFYDWRFAKHADGKVTGTDFVLNREPYRKATTLVVTGPNFGCGSSREHAPWALKDFGIMCIIAPSFGDIFYNNSFKNGLLPIRLPQDVIKEKLYPIASAGGELVIDLPAQQIADGEGHILVTQFDVEPSRKHCLVNGLDDIGLTLQKERFIADYEAMRRRDFSFLEGGSKLLPRISHSKPTSMPQAANDW.

Residues cysteine 357, cysteine 418, and cysteine 421 each contribute to the [4Fe-4S] cluster site. Residues 482 to 493 (SAPKVEVRHDTD) are compositionally biased toward basic and acidic residues. 2 disordered regions span residues 482 to 518 (SAPK…SDVA) and 525 to 544 (DIPV…SADA). Residues 527–538 (PVSNSSTQSPGS) show a composition bias toward polar residues.

Belongs to the aconitase/IPM isomerase family. As to quaternary structure, monomer. The cofactor is [4Fe-4S] cluster.

It carries out the reaction (2R,3S)-3-isopropylmalate = (2S)-2-isopropylmalate. The protein operates within amino-acid biosynthesis; L-leucine biosynthesis; L-leucine from 3-methyl-2-oxobutanoate: step 2/4. Its function is as follows. Catalyzes the isomerization between 2-isopropylmalate and 3-isopropylmalate, via the formation of 2-isopropylmaleate. The chain is 3-isopropylmalate dehydratase (LEU1) from Eremothecium gossypii (strain ATCC 10895 / CBS 109.51 / FGSC 9923 / NRRL Y-1056) (Yeast).